A 381-amino-acid chain; its full sequence is Stearoyl-[acyl-carrier-protein] 9-desaturase 1, chloroplastic (381 aa).

A chloroplast-targeting transit peptide spans 1–26 (MQVVGTVRVSGCGAVVAPSRRQCRVS). Residues Glu120, Glu158, His161, Glu211, Glu244, and His247 each coordinate Fe cation.

The protein belongs to the fatty acid desaturase type 2 family. In terms of assembly, homodimer. Requires Fe(2+) as cofactor.

Its subcellular location is the plastid. The protein localises to the chloroplast. It catalyses the reaction octadecanoyl-[ACP] + 2 reduced [2Fe-2S]-[ferredoxin] + O2 + 2 H(+) = (9Z)-octadecenoyl-[ACP] + 2 oxidized [2Fe-2S]-[ferredoxin] + 2 H2O. It functions in the pathway lipid metabolism; fatty acid metabolism. Its function is as follows. Converts stearoyl-ACP to oleoyl-ACP by introduction of a cis double bond between carbons 9 and 10 of the acyl chain. The chain is Stearoyl-[acyl-carrier-protein] 9-desaturase 1, chloroplastic from Oryza sativa subsp. indica (Rice).